Reading from the N-terminus, the 212-residue chain is Thymidine kinase (212 aa).

Residues Ser11–Thr18, Asp43–Arg45, and Asp86–Gln89 contribute to the ATP site. The active-site Proton acceptor is Glu87. Phe119 is a substrate binding site. Residues Cys144, Cys147, Cys183, and Cys186 each contribute to the Zn(2+) site.

The protein belongs to the thymidine kinase family.

It catalyses the reaction thymidine + ATP = dTMP + ADP + H(+). This is Thymidine kinase (TK) from Encephalitozoon cuniculi (strain GB-M1) (Microsporidian parasite).